We begin with the raw amino-acid sequence, 452 residues long: 2-succinylbenzoate--CoA ligase (452 aa).

The protein belongs to the ATP-dependent AMP-binding enzyme family. MenE subfamily.

It catalyses the reaction 2-succinylbenzoate + ATP + CoA = 2-succinylbenzoyl-CoA + AMP + diphosphate. Its pathway is quinol/quinone metabolism; 1,4-dihydroxy-2-naphthoate biosynthesis; 1,4-dihydroxy-2-naphthoate from chorismate: step 5/7. The protein operates within quinol/quinone metabolism; menaquinone biosynthesis. Its function is as follows. Converts 2-succinylbenzoate (OSB) to 2-succinylbenzoyl-CoA (OSB-CoA). This is 2-succinylbenzoate--CoA ligase from Haemophilus influenzae (strain ATCC 51907 / DSM 11121 / KW20 / Rd).